The chain runs to 438 residues: Trigger factor (438 aa).

The 86-residue stretch at 160 to 245 (DDKVVIDFVG…VKKIQEAQLP (86 aa)) folds into the PPIase FKBP-type domain.

The protein belongs to the FKBP-type PPIase family. Tig subfamily.

The protein localises to the cytoplasm. It catalyses the reaction [protein]-peptidylproline (omega=180) = [protein]-peptidylproline (omega=0). Its function is as follows. Involved in protein export. Acts as a chaperone by maintaining the newly synthesized protein in an open conformation. Functions as a peptidyl-prolyl cis-trans isomerase. The polypeptide is Trigger factor (Francisella philomiragia subsp. philomiragia (strain ATCC 25017 / CCUG 19701 / FSC 153 / O#319-036)).